A 191-amino-acid chain; its full sequence is Cdc42 homolog (191 aa).

GTP is bound at residue glycine 10–threonine 17. An Effector region motif is present at residues tyrosine 32 to tyrosine 40. GTP contacts are provided by residues aspartate 57–glutamine 61 and threonine 115–aspartate 118. The residue at position 188 (cysteine 188) is a Cysteine methyl ester. Cysteine 188 is lipidated: S-geranylgeranyl cysteine. Positions lysine 189–leucine 191 are cleaved as a propeptide — removed in mature form.

This sequence belongs to the small GTPase superfamily. Rho family. CDC42 subfamily.

It is found in the cell junction. The protein resides in the adherens junction. Its subcellular location is the cell membrane. Functionally, regulates mbt kinase activity and is also required to recruit mbt to adherens junctions. Together with mbt, regulates photoreceptor cell morphogenesis. This is Cdc42 homolog from Aedes aegypti (Yellowfever mosquito).